The primary structure comprises 316 residues: Nucleoside diphosphate-linked moiety X motif 6 (316 aa).

The 133-residue stretch at 141–273 (SHQVGVAGAV…TSRVARLLLY (133 aa)) folds into the Nudix hydrolase domain. The Nudix box motif lies at 176-197 (GLSEPEEDIGDTAVREVFEETG).

It belongs to the Nudix hydrolase family. In terms of assembly, monomer and homodimer. Detected in liver, kidney and esophagus (at protein level). Ubiquitous.

The protein localises to the cytoplasm. The protein resides in the nucleus. It is found in the mitochondrion. Its function is as follows. May contribute to the regulation of cell proliferation. In Homo sapiens (Human), this protein is Nucleoside diphosphate-linked moiety X motif 6 (NUDT6).